Consider the following 284-residue polypeptide: BTB/POZ domain-containing protein 2 (284 aa).

In terms of domain architecture, BTB spans Ser37–Ala108.

As to quaternary structure, interacts with cul3.

It localises to the cytoplasm. Its subcellular location is the nucleus. Its pathway is protein modification; protein ubiquitination. In terms of biological role, probable substrate-specific adapter of an E3 ubiquitin-protein ligase complex which mediates the ubiquitination and subsequent proteasomal degradation of target proteins. The sequence is that of BTB/POZ domain-containing protein 2 (btb2) from Schizosaccharomyces pombe (strain 972 / ATCC 24843) (Fission yeast).